Reading from the N-terminus, the 85-residue chain is Large ribosomal subunit protein bL27 (85 aa).

A disordered region spans residues 1-22 (MAHKKAGGSTRNGRDSEAKRMG).

The protein belongs to the bacterial ribosomal protein bL27 family.

In Escherichia coli O6:K15:H31 (strain 536 / UPEC), this protein is Large ribosomal subunit protein bL27.